A 487-amino-acid chain; its full sequence is Acetyl-coenzyme A carboxylase carboxyl transferase subunit beta, chloroplastic (487 aa).

The region spanning 223 to 487 (LWIQCDNCYG…FCPLNKTEIK (265 aa)) is the CoA carboxyltransferase N-terminal domain. 4 residues coordinate Zn(2+): cysteine 227, cysteine 230, cysteine 243, and cysteine 246. A C4-type zinc finger spans residues 227–246 (CDNCYGLMYKKVKMNVCEQC).

Belongs to the AccD/PCCB family. In terms of assembly, acetyl-CoA carboxylase is a heterohexamer composed of biotin carboxyl carrier protein, biotin carboxylase and 2 subunits each of ACCase subunit alpha and ACCase plastid-coded subunit beta (accD). The cofactor is Zn(2+).

It localises to the plastid. It is found in the chloroplast stroma. The catalysed reaction is N(6)-carboxybiotinyl-L-lysyl-[protein] + acetyl-CoA = N(6)-biotinyl-L-lysyl-[protein] + malonyl-CoA. Its pathway is lipid metabolism; malonyl-CoA biosynthesis; malonyl-CoA from acetyl-CoA: step 1/1. In terms of biological role, component of the acetyl coenzyme A carboxylase (ACC) complex. Biotin carboxylase (BC) catalyzes the carboxylation of biotin on its carrier protein (BCCP) and then the CO(2) group is transferred by the transcarboxylase to acetyl-CoA to form malonyl-CoA. In Nasturtium officinale (Watercress), this protein is Acetyl-coenzyme A carboxylase carboxyl transferase subunit beta, chloroplastic.